The following is a 1145-amino-acid chain: Error-prone DNA polymerase (1145 aa).

This sequence belongs to the DNA polymerase type-C family. DnaE2 subfamily.

The protein resides in the cytoplasm. The catalysed reaction is DNA(n) + a 2'-deoxyribonucleoside 5'-triphosphate = DNA(n+1) + diphosphate. Functionally, DNA polymerase involved in damage-induced mutagenesis and translesion synthesis (TLS). It is not the major replicative DNA polymerase. The polypeptide is Error-prone DNA polymerase (Rhodopirellula baltica (strain DSM 10527 / NCIMB 13988 / SH1)).